The following is a 184-amino-acid chain: Ethylene-responsive transcription factor ERF010 (184 aa).

Positions 20–77 form a DNA-binding region, AP2/ERF; sequence PYKGIRMRKWGKWVAEIREPNKRSRLWLGSYSTPEAAARAYDTAVFYLRGPTARLNFP. Residues 123-184 form a disordered region; that stretch reads QNRDSDVDNK…SSDEEWESKH (62 aa). Over residues 161–172 the composition is skewed to basic and acidic residues; sequence LLDRVDLNKLPD. Residues 174–184 are compositionally biased toward acidic residues; it reads ESSDEEWESKH.

It belongs to the AP2/ERF transcription factor family. ERF subfamily.

It localises to the nucleus. Its function is as follows. Probably acts as a transcriptional activator. Binds to the GCC-box pathogenesis-related promoter element. May be involved in the regulation of gene expression by stress factors and by components of stress signal transduction pathways. In Arabidopsis thaliana (Mouse-ear cress), this protein is Ethylene-responsive transcription factor ERF010 (ERF010).